We begin with the raw amino-acid sequence, 482 residues long: Aspartyl/glutamyl-tRNA(Asn/Gln) amidotransferase subunit B (482 aa).

Belongs to the GatB/GatE family. GatB subfamily. In terms of assembly, heterotrimer of A, B and C subunits.

It carries out the reaction L-glutamyl-tRNA(Gln) + L-glutamine + ATP + H2O = L-glutaminyl-tRNA(Gln) + L-glutamate + ADP + phosphate + H(+). It catalyses the reaction L-aspartyl-tRNA(Asn) + L-glutamine + ATP + H2O = L-asparaginyl-tRNA(Asn) + L-glutamate + ADP + phosphate + 2 H(+). In terms of biological role, allows the formation of correctly charged Asn-tRNA(Asn) or Gln-tRNA(Gln) through the transamidation of misacylated Asp-tRNA(Asn) or Glu-tRNA(Gln) in organisms which lack either or both of asparaginyl-tRNA or glutaminyl-tRNA synthetases. The reaction takes place in the presence of glutamine and ATP through an activated phospho-Asp-tRNA(Asn) or phospho-Glu-tRNA(Gln). This chain is Aspartyl/glutamyl-tRNA(Asn/Gln) amidotransferase subunit B, found in Thermotoga sp. (strain RQ2).